A 309-amino-acid polypeptide reads, in one-letter code: Mitochondrial import receptor subunit TOM34 (309 aa).

Serine 8 is modified (phosphoserine). TPR repeat units follow at residues 9-42 (VEEL…LQAQ), 51-84 (SVLY…VPFS), and 86-118 (KPLL…DDNV). Serine 160 carries the post-translational modification Phosphoserine. A disordered region spans residues 161-189 (LPSENHKEMAKSKSKETTATKNRVPSAGD). Residues 164 to 178 (ENHKEMAKSKSKETT) are compositionally biased toward basic and acidic residues. Serine 186 carries the post-translational modification Phosphoserine. TPR repeat units lie at residues 193-226 (ARVL…SNLE), 227-260 (SATY…DGKN), and 262-294 (KAFY…EPRN). Residue lysine 197 forms a Glycyl lysine isopeptide (Lys-Gly) (interchain with G-Cter in SUMO2) linkage.

This sequence belongs to the Tom34 family. In terms of assembly, interacts with HSP90A, VCP, ATP6V1D, KIAA0665, AMPK, and DMAP1 through its TPR repeat. Ubiquitous.

The protein resides in the cytoplasm. It localises to the mitochondrion outer membrane. Its function is as follows. Plays a role in the import of cytosolically synthesized preproteins into mitochondria. Binds the mature portion of precursor proteins. Interacts with cellular components, and possesses weak ATPase activity. May be a chaperone-like protein that helps to keep newly synthesized precursors in an unfolded import compatible state. The sequence is that of Mitochondrial import receptor subunit TOM34 (TOMM34) from Homo sapiens (Human).